The primary structure comprises 153 residues: uncharacterized protein (153 aa).

This is an uncharacterized protein from Bacillus subtilis (strain 168).